The primary structure comprises 274 residues: Ubiquinone biosynthesis O-methyltransferase, mitochondrial (274 aa).

The transit peptide at 1–30 (MNSMNILNKVKNVKSYTRLVRQGFLSQQRN) directs the protein to the mitochondrion. Residues Arg65, Gly88, Asp109, and Met154 each coordinate S-adenosyl-L-methionine. Mg(2+)-binding residues include Glu155, Glu158, and His159.

This sequence belongs to the class I-like SAM-binding methyltransferase superfamily. UbiG/COQ3 family. Component of a multi-subunit COQ enzyme complex, composed of at least coq3, coq4, coq5, coq6, coq7 and coq9. Mg(2+) is required as a cofactor.

The protein resides in the mitochondrion inner membrane. It carries out the reaction 3,4-dihydroxy-5-(all-trans-decaprenyl)benzoate + S-adenosyl-L-methionine = 4-hydroxy-3-methoxy-5-(all-trans-decaprenyl)benzoate + S-adenosyl-L-homocysteine + H(+). It catalyses the reaction a 3-demethylubiquinone + S-adenosyl-L-methionine = a ubiquinone + S-adenosyl-L-homocysteine. The catalysed reaction is 3-demethylubiquinol-10 + S-adenosyl-L-methionine = ubiquinol-10 + S-adenosyl-L-homocysteine + H(+). It participates in cofactor biosynthesis; ubiquinone biosynthesis. O-methyltransferase required for two non-consecutive steps during ubiquinone biosynthesis. Catalyzes the 2 O-methylation of 3,4-dihydroxy-5-(all-trans-decaprenyl)benzoic acid into 4-hydroxy-3-methoxy-5-(all-trans-decaprenyl)benzoic acid. Also catalyzes the last step of ubiquinone biosynthesis by mediating methylation of 3-demethylubiquinone into ubiquinone. Also able to mediate the methylation of 3-demethylubiquinol-10 into ubiquinol-10. The polypeptide is Ubiquinone biosynthesis O-methyltransferase, mitochondrial (Schizosaccharomyces pombe (strain 972 / ATCC 24843) (Fission yeast)).